A 555-amino-acid polypeptide reads, in one-letter code: MPSWIRAVILPLSGLLLTLPAAADVKARSCSEVRQAYGAKGFSLADIPYQEIAGEHLRICPQEYTCCTTEMEDKLSQQSKLEFENLVEETSHFVRTTFVSRHKKFDEFFRELLENAEKSLNDMFVRTYGMLYMQNSEVFQDLFTELKRYYTGGNVNLEEMLNDFWARLLERMFQLINPQYHFSEDYLECVSKYTDQLKPFGDVPRKLKIQVTRAFIAARTFVQGLTVGREVANRVSKVSPTPGCIRALMKMLYCPYCRGLPTVRPCNNYCLNVMKGCLANQADLDTEWNLFIDAMLLVAERLEGPFNIESVMDPIDVKISEAIMNMQENSMQVSAKVFQGCGQPKPAPALRSARSAPENFNTRFRPYNPEERPTTAAGTSLDRLVTDIKEKLKLSKKVWSALPYTICKDERVTAGTSNEEECWNGHSKARYLPEIMNDGLTNQINNPEVEVDITRPDTFIRQQIMALRVMTNKLKNAYNGNDVNFQDTSDESSGSGSGSGCMDDVCPTEFEFVTTEAPAVDPDRREEESSASKFSSSLISWSLVCMVLALQRLYR.

The signal sequence occupies residues 1 to 23 (MPSWIRAVILPLSGLLLTLPAAA). Residues 348-357 (PALRSARSAP) are compositionally biased toward low complexity. Disordered regions lie at residues 348–376 (PALRSARSAPENFNTRFRPYNPEERPTTA) and 480–501 (GNDVNFQDTSDESSGSGSGSGC). S530 carries GPI-anchor amidated serine lipidation. Residues 531–555 (ASKFSSSLISWSLVCMVLALQRLYR) constitute a propeptide, removed in mature form.

The protein belongs to the glypican family. In terms of tissue distribution, in the cartilage growth-plate, gradient of expression with highest levels from the proliferative and pre-hypertrophic zones to lowest, if any, in the hypertrophic zones (at protein level).

It is found in the cell membrane. It localises to the secreted. Its subcellular location is the extracellular space. Its function is as follows. Cell surface proteoglycan that bears heparan sulfate. Putative cell surface coreceptor for growth factors, extracellular matrix proteins, proteases and anti-proteases. Enhances migration and invasion of cancer cells through WNT5A signaling. This Mus musculus (Mouse) protein is Glypican-6 (Gpc6).